The following is a 595-amino-acid chain: UvrABC system protein C (595 aa).

A GIY-YIG domain is found at 14 to 91; the sequence is SNPGCYLHKD…IQENMPKFNI (78 aa). A UVR domain is found at 196 to 231; the sequence is DKIVNQLKAKMKDMSDQMEFERAAEYRDLIEAVSTL.

Belongs to the UvrC family. In terms of assembly, interacts with UvrB in an incision complex.

The protein localises to the cytoplasm. Its function is as follows. The UvrABC repair system catalyzes the recognition and processing of DNA lesions. UvrC both incises the 5' and 3' sides of the lesion. The N-terminal half is responsible for the 3' incision and the C-terminal half is responsible for the 5' incision. The protein is UvrABC system protein C of Streptococcus thermophilus (strain CNRZ 1066).